The chain runs to 425 residues: Testicular acid phosphatase (425 aa).

The first 27 residues, 1-27, serve as a signal peptide directing secretion; sequence MAEPGSQGHTVGPLLLLLLLLLPRALP. Over 28–392 the chain is Extracellular; sequence EGPLLFVALV…EPASPPATVP (365 aa). Residue H40 is the Nucleophile of the active site. 3 disulfide bridges follow: C158/C378, C213/C311, and C353/C357. D288 serves as the catalytic Proton donor. Residues 393–413 traverse the membrane as a helical segment; the sequence is LLAGAVAVLAVLSLGLGLLAW. Over 414 to 425 the chain is Cytoplasmic; it reads RPRCLRALGGTV.

The protein belongs to the histidine acid phosphatase family. Homodimer. Post-translationally, glycosylated.

Its subcellular location is the membrane. It carries out the reaction a phosphate monoester + H2O = an alcohol + phosphate. Its function is as follows. May dephosphorylate receptor tyrosine-protein kinase ERBB4 and inhibits its ligand-induced proteolytic cleavage. May play a role in odontogenesis. The chain is Testicular acid phosphatase from Mus musculus (Mouse).